Consider the following 326-residue polypeptide: o-succinylbenzoate synthase (326 aa).

The active-site Proton donor is the Lys110. Residues Asp138, Glu165, and Asp188 each coordinate Mg(2+). The active-site Proton acceptor is the Lys212.

Belongs to the mandelate racemase/muconate lactonizing enzyme family. MenC type 1 subfamily. A divalent metal cation is required as a cofactor.

It carries out the reaction (1R,6R)-6-hydroxy-2-succinyl-cyclohexa-2,4-diene-1-carboxylate = 2-succinylbenzoate + H2O. Its pathway is quinol/quinone metabolism; 1,4-dihydroxy-2-naphthoate biosynthesis; 1,4-dihydroxy-2-naphthoate from chorismate: step 4/7. It participates in quinol/quinone metabolism; menaquinone biosynthesis. Functionally, converts 2-succinyl-6-hydroxy-2,4-cyclohexadiene-1-carboxylate (SHCHC) to 2-succinylbenzoate (OSB). The chain is o-succinylbenzoate synthase from Mycobacterium bovis (strain ATCC BAA-935 / AF2122/97).